The chain runs to 163 residues: MKEKIPFYNEKEFHDMVKKTKKGTFSGWYIINKNNNSVEFSGSFNRQFKLNKPVIPVNTEYVTRKEFNEYKDSNDQRLTKIETELKSQGQRIQVVEDKVDRLTEVVMVQSQQIKTQGEAMNARMDRFESLVLKSLESIGNTLTDFGKRLDVIETRLDKIDPPK.

This sequence belongs to the UPF0134 family.

This Mycoplasma pneumoniae (strain ATCC 29342 / M129 / Subtype 1) (Mycoplasmoides pneumoniae) protein is UPF0134 protein MPN_139.